The primary structure comprises 550 residues: Selinene synthase (550 aa).

Mg(2+) contacts are provided by Asp314, Asp318, Asp450, and Glu458. The DDXXD motif signature appears at Asp314–Asp318.

It belongs to the terpene synthase family. It depends on Mg(2+) as a cofactor. Requires Mn(2+) as cofactor.

It carries out the reaction (2E,6E)-farnesyl diphosphate = (+)-beta-selinene + diphosphate. The enzyme catalyses (2E,6E)-farnesyl diphosphate = alpha-selinene + diphosphate. It functions in the pathway secondary metabolite biosynthesis; terpenoid biosynthesis. Sesquiterpene synthase that catalyzes the formation of alpha- and beta-selinene from trans,trans-farnesyl diphosphate (FPP). Also produces some nerolidol. The chain is Selinene synthase (SES) from Ocimum basilicum (Sweet basil).